A 167-amino-acid polypeptide reads, in one-letter code: uncharacterized protein (167 aa).

Residues 115–167 (SYRSQPQLGFKSTPPAHSSVFHHSVKAPKEDQAQEAASRPLTSQDGWNPNIKK) are disordered.

This is an uncharacterized protein from Homo sapiens (Human).